We begin with the raw amino-acid sequence, 785 residues long: Neutral ceramidase (785 aa).

A signal peptide spans 1–35 (MEASSWLCYQARGFGSSRVWLWLLLALVLLNCSLV). N31 carries an N-linked (GlcNAc...) asparagine glycan. Catalysis depends on S359, which acts as the Nucleophile. N-linked (GlcNAc...) asparagine glycans are attached at residues N377, N675, and N685.

The protein belongs to the neutral ceramidase family. In terms of tissue distribution, expressed in seedlings, with higher levels in roots than in shoots.

The protein resides in the secreted. Its subcellular location is the endoplasmic reticulum. The protein localises to the golgi apparatus. The catalysed reaction is an N-acylsphing-4-enine + H2O = sphing-4-enine + a fatty acid. Enhanced activity in the presence of calcium, magnesium, manganese and zinc ions, but inhibited activity in the presence of iron ion. In terms of biological role, hydrolyzes the sphingolipid ceramide into sphingosine and free fatty acid. Uses ceramide instead of phytoceramide as substrate. The chain is Neutral ceramidase from Oryza sativa subsp. japonica (Rice).